A 206-amino-acid chain; its full sequence is MDPVRLYYSYNDIHKMCAQQAEKILETFRPDVIIAIGGGGFIPARILRTFLKKKGSKNIPIQAIGLSLYEELVSDSPEEVPGLEVKRTQWLDFSTLGMVDLVGKNILIVDEVDDTRTTLHYALRELQRDVAEQAKKLNREGEKTTFGIFVVHNKVKPKNAQLDKEILDKYYFTGCNTPDCWIMYPWEAQDIEEHDSHVAKMGDLKP.

GMP-binding positions include 110–118 (DEVDDTRTT), lysine 154, and 181–187 (WIMYPWE). The Proton acceptor role is filled by aspartate 114.

Belongs to the purine/pyrimidine phosphoribosyltransferase family. Dimer. Requires Mg(2+) as cofactor.

Its subcellular location is the endoplasmic reticulum. It carries out the reaction IMP + diphosphate = hypoxanthine + 5-phospho-alpha-D-ribose 1-diphosphate. It catalyses the reaction GMP + diphosphate = guanine + 5-phospho-alpha-D-ribose 1-diphosphate. In terms of biological role, converts guanine to guanosine monophosphate, and hypoxanthine to inosine monophosphate. Transfers the 5-phosphoribosyl group from 5-phosphoribosylpyrophosphate onto the purine. Plays a central role in the generation of purine nucleotides through the purine salvage pathway. This is Hypoxanthine-guanine phosphoribosyltransferase (hpt1) from Schizosaccharomyces pombe (strain 972 / ATCC 24843) (Fission yeast).